The primary structure comprises 1332 residues: Aldehyde oxidase 1 (1332 aa).

The region spanning 4–91 is the 2Fe-2S ferredoxin-type domain; that stretch reads STLYFYVNGR…GAAVTTVEGV (88 aa). The [2Fe-2S] cluster site is built by Cys43, Cys48, Cys51, and Cys73. Position 112 (Gln112) interacts with Mo-molybdopterin. Cys113, Cys116, Cys148, and Cys150 together coordinate [2Fe-2S] cluster. Cys150 provides a ligand contact to Mo-molybdopterin. In terms of domain architecture, FAD-binding PCMH-type spans 234–419; sequence FTGDRVTWIS…LSVTIPYSRK (186 aa). FAD contacts are provided by residues 262–269, Ala343, Ser352, His356, Asp365, and Leu409; that span reads VVMGNTSV. Mo-molybdopterin-binding positions include 800 to 801, Met1041, 1082 to 1085, Gln1197, and Leu1262; these read AF and GSVV. Catalysis depends on Glu1264, which acts as the Proton acceptor; for azaheterocycle hydroxylase activity.

This sequence belongs to the xanthine dehydrogenase family. In terms of assembly, homodimer. [2Fe-2S] cluster serves as cofactor. FAD is required as a cofactor. It depends on Mo-molybdopterin as a cofactor. Expressed in liver.

The protein resides in the cytoplasm. It carries out the reaction an aldehyde + O2 + H2O = a carboxylate + H2O2 + H(+). It catalyses the reaction retinal + O2 + H2O = retinoate + H2O2 + H(+). With respect to regulation, inhibited by menadione and isovanillin. Not inhibited by allopurinol, a xanthine dehydrogenase potent inhibitor. Its function is as follows. Oxidase with broad substrate specificity, oxidizing aromatic azaheterocycles, such as N1-methylnicotinamide, N-methylphthalazinium and phthalazine, as well as aldehydes, such as benzaldehyde, retinal, pyridoxal, and vanillin. Plays a key role in the metabolism of xenobiotics and drugs containing aromatic azaheterocyclic substituents. Participates in the bioactivation of prodrugs such as famciclovir, catalyzing the oxidation step from 6-deoxypenciclovir to penciclovir, which is a potent antiviral agent. Is probably involved in the regulation of reactive oxygen species homeostasis. May be a prominent source of superoxide generation via the one-electron reduction of molecular oxygen. May also catalyze nitric oxide (NO) production via the reduction of nitrite to NO with NADH or aldehyde as electron donor. May play a role in adipogenesis. This chain is Aldehyde oxidase 1, found in Cavia porcellus (Guinea pig).